We begin with the raw amino-acid sequence, 639 residues long: Serine/threonine-protein kinase PAK mbt (639 aa).

The 14-residue stretch at Ile-11–Gly-24 folds into the CRIB domain. Residues Phe-25–Asn-367 form a linker region. Disordered regions lie at residues His-79–Tyr-195 and Arg-222–Arg-345. Composition is skewed to low complexity over residues Asn-91–Gly-129, Val-138–Pro-159, Pro-227–Pro-241, and Gln-274–His-295. Basic residues predominate over residues Pro-296–Leu-308. Low complexity predominate over residues Ala-309–Gly-331. The 252-residue stretch at Leu-368–Leu-619 folds into the Protein kinase domain. Residues Ile-374–Val-382 and Lys-397 each bind ATP. Residue Asp-487 is the Proton acceptor of the active site. At Ser-521 the chain carries Phosphoserine. Thr-525 carries the phosphothreonine modification.

The protein belongs to the protein kinase superfamily. STE Ser/Thr protein kinase family. STE20 subfamily. As to quaternary structure, interacts tightly with GTP-bound but not GDP-bound Cdc42 and weakly with Rac1. Requires Mg(2+) as cofactor. Post-translationally, autophosphorylated when activated by Cdc42. In terms of tissue distribution, expressed in adult brain and eye. High levels detected in developing photoreceptor cells and future bristle cells, and lower levels in cone and pigment cells, as detected in third instar eye imaginal disks (at protein level).

It localises to the cell junction. It is found in the adherens junction. Its subcellular location is the cell membrane. The catalysed reaction is L-seryl-[protein] + ATP = O-phospho-L-seryl-[protein] + ADP + H(+). It catalyses the reaction L-threonyl-[protein] + ATP = O-phospho-L-threonyl-[protein] + ADP + H(+). Functionally, involved in neurogenesis of the adult central nervous system, and together with Cdc42, regulates photoreceptor cell morphogenesis. Phosphorylates exogenous substrates when activated by Cdc42. The chain is Serine/threonine-protein kinase PAK mbt from Drosophila melanogaster (Fruit fly).